Here is a 549-residue protein sequence, read N- to C-terminus: Beta-mannosyltransferase 3 (549 aa).

The Cytoplasmic portion of the chain corresponds to 1–37 (MFESDLSFYSALLILCCPISIVFFKKFPIKGYTGANK). A helical transmembrane segment spans residues 38–58 (VSLFLQCLIAILNLNILYSFI). The Extracellular portion of the chain corresponds to 59-549 (NSLTITLGHD…DTMGWDKLSR (491 aa)).

This sequence belongs to the BMT family.

The protein localises to the membrane. Beta-mannosyltransferase involved in cell wall biosynthesis. Required for addition of the second beta-mannose residue to acid-stable fraction of cell wall phosphopeptidomannan, and in elongation of beta-mannose chains on the phosphopeptidomannan acid-labile fraction. The protein is Beta-mannosyltransferase 3 (BMT3) of Candida albicans (strain SC5314 / ATCC MYA-2876) (Yeast).